The following is a 290-amino-acid chain: Fructose-1,6-bisphosphatase class 1 (290 aa).

Residues Glu78, Asp96, Leu98, and Asp99 each contribute to the Mg(2+) site. Residues 99–102 (DGSS), Tyr201, and Lys226 each bind substrate. Glu232 is a binding site for Mg(2+).

Belongs to the FBPase class 1 family. Homotetramer. Requires Mg(2+) as cofactor.

It localises to the cytoplasm. It catalyses the reaction beta-D-fructose 1,6-bisphosphate + H2O = beta-D-fructose 6-phosphate + phosphate. It functions in the pathway carbohydrate biosynthesis; gluconeogenesis. This chain is Fructose-1,6-bisphosphatase class 1, found in Helicobacter pylori (strain HPAG1).